A 465-amino-acid polypeptide reads, in one-letter code: Probable protein phosphatase 2C 71 (465 aa).

Disordered regions lie at residues 14–47, 68–119, and 133–191; these read RPCKLAPPPPPPLPVSPSPRHHRRPHSTATACRA, RPRD…GEVT, and SGGA…PAEE. Residues 18 to 30 show a composition bias toward pro residues; it reads LAPPPPPPLPVSP. Low complexity-rich tracts occupy residues 84 to 106 and 133 to 143; these read AVAPEAAAVVESGLDGDAAAAAE and SGGAEATATSG. Residues 222 to 460 enclose the PPM-type phosphatase domain; it reads ASGAAILPHP…DDIAVVVSIV (239 aa). Mn(2+)-binding residues include D254, G255, D384, and D451.

This sequence belongs to the PP2C family. Mg(2+) is required as a cofactor. Mn(2+) serves as cofactor.

It catalyses the reaction O-phospho-L-seryl-[protein] + H2O = L-seryl-[protein] + phosphate. The catalysed reaction is O-phospho-L-threonyl-[protein] + H2O = L-threonyl-[protein] + phosphate. In Oryza sativa subsp. japonica (Rice), this protein is Probable protein phosphatase 2C 71.